The primary structure comprises 385 residues: Succinate--CoA ligase [ADP-forming] subunit beta (385 aa).

The region spanning 9-244 (KEVLRKYGVS…LDEEDPKEIE (236 aa)) is the ATP-grasp domain. ATP contacts are provided by residues Lys46, 53 to 55 (GRG), Glu99, Cys102, and Glu107. 2 residues coordinate Mg(2+): Asn199 and Asp213. Ser220 bears the Phosphoserine mark. Substrate contacts are provided by residues Asn264 and 321-323 (GIM).

It belongs to the succinate/malate CoA ligase beta subunit family. Heterotetramer of two alpha and two beta subunits. Interacts with BrxC. The cofactor is Mg(2+).

The catalysed reaction is succinate + ATP + CoA = succinyl-CoA + ADP + phosphate. The enzyme catalyses GTP + succinate + CoA = succinyl-CoA + GDP + phosphate. Its pathway is carbohydrate metabolism; tricarboxylic acid cycle; succinate from succinyl-CoA (ligase route): step 1/1. Its function is as follows. Succinyl-CoA synthetase functions in the citric acid cycle (TCA), coupling the hydrolysis of succinyl-CoA to the synthesis of either ATP or GTP and thus represents the only step of substrate-level phosphorylation in the TCA. The beta subunit provides nucleotide specificity of the enzyme and binds the substrate succinate, while the binding sites for coenzyme A and phosphate are found in the alpha subunit. This Bacillus subtilis (strain 168) protein is Succinate--CoA ligase [ADP-forming] subunit beta.